Consider the following 274-residue polypeptide: 2,3,4,5-tetrahydropyridine-2,6-dicarboxylate N-succinyltransferase (274 aa).

Belongs to the transferase hexapeptide repeat family.

It is found in the cytoplasm. It catalyses the reaction (S)-2,3,4,5-tetrahydrodipicolinate + succinyl-CoA + H2O = (S)-2-succinylamino-6-oxoheptanedioate + CoA. It participates in amino-acid biosynthesis; L-lysine biosynthesis via DAP pathway; LL-2,6-diaminopimelate from (S)-tetrahydrodipicolinate (succinylase route): step 1/3. This Shigella boydii serotype 18 (strain CDC 3083-94 / BS512) protein is 2,3,4,5-tetrahydropyridine-2,6-dicarboxylate N-succinyltransferase.